The chain runs to 358 residues: Homer protein homolog 3 (358 aa).

The required for interaction with NFATC2 stretch occupies residues 1 to 80 (MSTAREQPIF…TKTSQKFGQW (80 aa)). One can recognise a WH1 domain in the interval 1-113 (MSTAREQPIF…EKFQEVKEAA (113 aa)). The stretch at 95–122 (SEQQLTQFAEKFQEVKEAARLAREKSQD) forms a coiled coil. Phosphoserine is present on residues Ser-120 and Ser-158. 2 disordered regions span residues 137 to 168 (QVPP…TERE) and 239 to 296 (AEPV…QVQD). Residues 190-355 (ALQDSNQRLA…LREGLARLAE (166 aa)) adopt a coiled-coil conformation. The segment covering 257–267 (LEARVQTKDQE) has biased composition (basic and acidic residues). Positions 268–277 (IQTLKNQSTG) are enriched in polar residues. Positions 280–290 (EAPDTAEREET) are enriched in basic and acidic residues.

The protein belongs to the Homer family. Tetramer. Encodes coiled-coil structures that mediate homo- and heteromultimerization. Interacts with NFATC2; interaction is calcium independent; interaction competes with PPP3CA for NFATC2 binding; interaction is reduced by AKT activation. Interacts with NFATC1 and NFATC4. Interacts with SHANK1; forms a high-order complex at least composed of SHANK1 and HOMER3; the complex formation is regulated by CAMK2A-mediated phosphorylation.

It localises to the cytoplasm. It is found in the postsynaptic density. The protein localises to the synapse. In terms of biological role, postsynaptic density scaffolding protein. Binds and cross-links cytoplasmic regions of GRM1, GRM5, ITPR1, DNM3, RYR1, RYR2, SHANK1 and SHANK3. By physically linking GRM1 and GRM5 with ER-associated ITPR1 receptors, it aids the coupling of surface receptors to intracellular calcium release. Negatively regulates T cell activation by inhibiting the calcineurin-NFAT pathway. Acts by competing with calcineurin/PPP3CA for NFAT protein binding, hence preventing NFAT activation by PPP3CA. The chain is Homer protein homolog 3 from Rattus norvegicus (Rat).